The primary structure comprises 138 residues: Acidic phospholipase A2 2 (138 aa).

Residues 1–16 form the signal peptide; that stretch reads MRTLWIVAVLLLGVEG. Cystine bridges form between Cys42–Cys131, Cys44–Cys60, Cys59–Cys111, Cys65–Cys138, Cys66–Cys104, Cys73–Cys97, and Cys91–Cys102. Ca(2+) is bound by residues Tyr43, Gly45, and Gly47. His63 is an active-site residue. Asp64 is a Ca(2+) binding site. Asp105 is a catalytic residue.

Belongs to the phospholipase A2 family. Group II subfamily. D49 sub-subfamily. Ca(2+) serves as cofactor. Expressed by the venom gland.

It localises to the secreted. It catalyses the reaction a 1,2-diacyl-sn-glycero-3-phosphocholine + H2O = a 1-acyl-sn-glycero-3-phosphocholine + a fatty acid + H(+). Functionally, snake venom phospholipase A2 (PLA2) that displays edema-inducing activities, exhibits indirect hemolytic activity, and inhibits ADP-induced platelet aggregation. PLA2 catalyzes the calcium-dependent hydrolysis of the 2-acyl groups in 3-sn-phosphoglycerides. The sequence is that of Acidic phospholipase A2 2 from Protobothrops mucrosquamatus (Taiwan habu).